The sequence spans 246 residues: Probable phosphatase PBPRB2022 (246 aa).

Zn(2+)-binding residues include H8, H10, H16, H41, E74, H102, H132, D193, and H195.

This sequence belongs to the PHP family. The cofactor is Zn(2+).

This is Probable phosphatase PBPRB2022 from Photobacterium profundum (strain SS9).